Reading from the N-terminus, the 588-residue chain is MSILVIILILPILFGEVPPVNSGRVVDLNRNVRTDDHPTDLYPLYECGKQDTAVPISSWYGACRGSCSITRNTTDNTMEIFFRNDSVGWIDVLSLQTSPIRKNSHVTWYGECEKSSDVSSARPAPSEIIDTVAPAILDKMDTWPYGGAVFIYDTIDFPECKYTSDYSRSGWRIMVSKRSLELKSDISGEGYIIDPDLGFYFPISKGKGLGRFWWIWQQNSLSQQGCYFKTAGVVNCTLLLDTYTYSCPGINVAFSARIGNHLTSSCVGEVNISTDGITYKLHNQVSVGSISNQLISLWHQSEEALIQQLIIVINDALGKIESSYCESTCDLTEIAMSKHSDHPLVIETPVGPWLPASKGGEFVVIPCQSEPNLVVMTPIETCLSPFLIKVKSLKTGEVYWWMPTESHVSPDRQCLGHEEEELYLKSTQRKPLQFEFWKGAYIIDYPYNGSGRWIMNPGGFIHRSSKWFPSLTELSYTAPISLPTITEGVDKKVHQVIMSVGDIGNTTGSXWFAWMQPLGDKLARAVGSVASSLLIWWTTLEEEVKHGVIIVFFTVIGLIIAVPTLKMLLKGRRPYEPVKSPVVWGGPR.

An N-terminal signal peptide occupies residues 1-22 (MSILVIILILPILFGEVPPVNS). At 23–547 (GRVVDLNRNV…TTLEEEVKHG (525 aa)) the chain is on the virion surface side. A helical membrane pass occupies residues 548-568 (VIIVFFTVIGLIIAVPTLKML). At 569–588 (LKGRRPYEPVKSPVVWGGPR) the chain is on the intravirion side.

This sequence belongs to the nucleorhabdovirus glycoprotein family. As to quaternary structure, homotrimer. Interacts with matrix protein. Glycosylated by host. Glycosylation is crucial for glycoprotein export at the cell surface.

Its subcellular location is the virion membrane. Its function is as follows. Attaches the virus to host cellular receptor, inducing endocytosis of the virion. In the endosome, the acidic pH induces conformational changes in the glycoprotein trimer, which trigger fusion between virus and cell membrane. The chain is Glycoprotein (G) from Taro vein chlorosis virus (TAVCV).